We begin with the raw amino-acid sequence, 299 residues long: Transcription elongation factor A protein 2 (299 aa).

The 78-residue stretch at 6–83 folds into the TFIIS N-terminal domain; it reads EEIARIARRL…KSWKKLLDAS (78 aa). Lysine 58 participates in a covalent cross-link: Glycyl lysine isopeptide (Lys-Gly) (interchain with G-Cter in ubiquitin). Serine 60 and serine 100 each carry phosphoserine. Positions 86–128 are disordered; the sequence is KARERGRGMPLPTSSRDASEAPDPSRKRPELPRAPSTPRITTF. Residues 102-116 are compositionally biased toward basic and acidic residues; that stretch reads DASEAPDPSRKRPEL. In terms of domain architecture, TFIIS central spans 138 to 254; it reads VRNKCREMLT…EHQMARTGGT (117 aa). The TFIIS-type zinc finger occupies 257–297; it reads DLFTCGKCRKKNCTYTQVQTRSSDEPMTTFVVCNECGNRWK. Zn(2+) is bound by residues cysteine 261, cysteine 264, cysteine 289, and cysteine 292.

This sequence belongs to the TFS-II family. Interacts with the basal transcription factor GTF2B. Interacts with REXO1. Testis and ovary specific.

It is found in the nucleus. Functionally, necessary for efficient RNA polymerase II transcription elongation past template-encoded arresting sites. The arresting sites in DNA have the property of trapping a certain fraction of elongating RNA polymerases that pass through, resulting in locked ternary complexes. Cleavage of the nascent transcript by S-II allows the resumption of elongation from the new 3'-terminus. This chain is Transcription elongation factor A protein 2 (TCEA2), found in Homo sapiens (Human).